The chain runs to 329 residues: HTH-type transcriptional regulator ArgR (329 aa).

In terms of domain architecture, HTH araC/xylS-type spans 214-312 (TQAVLLMEAN…GVTPREDRNQ (99 aa)). 2 consecutive DNA-binding regions (H-T-H motif) follow at residues 231 to 252 (DEIAQHVCVSRRQLERIFKQYL) and 279 to 302 (IIQIGLSCGFSSGPHFSSAYRNFF). Residues 307 to 329 (REDRNQRRGGSAFETTFTPVERG) form a disordered region. Positions 319-329 (FETTFTPVERG) are enriched in polar residues.

Its function is as follows. ArgR could be a transcriptional activator of the dauBAR operon in response to the presence of L-Arg. This Pseudomonas aeruginosa (strain ATCC 15692 / DSM 22644 / CIP 104116 / JCM 14847 / LMG 12228 / 1C / PRS 101 / PAO1) protein is HTH-type transcriptional regulator ArgR (argR).